The chain runs to 192 residues: Natural cytotoxicity triggering receptor 3 (192 aa).

A signal peptide spans 1 to 18; sequence MAKVLLIVFIMVYAGSCA. An Ig-like domain is found at 19–126; the sequence is IWVSQPPEIR…VGTGNGTRLV (108 aa). At 19–147 the chain is on the extracellular side; it reads IWVSQPPEIR…AEPERAAYTS (129 aa). Cysteine 39 and cysteine 108 are disulfide-bonded. N-linked (GlcNAc...) asparagine glycosylation is found at asparagine 42 and asparagine 121. The chain crosses the membrane as a helical span at residues 148–168; that stretch reads LLLRAGVYALSFLSVATGSVI. Residues 169-192 are Cytoplasmic-facing; sequence YYQGKCLCHVGNTATPPTASEERF.

The protein belongs to the natural cytotoxicity receptor (NCR) family. In terms of assembly, homodimer in the unliganted form. Interacts with CD3Z. Interacts with and is activated by binding to NCR3LG1. Interacts with and is activated by binding to BAG6. Interacts with and is inhibited by binding to LGALS3.

The protein resides in the cell membrane. Functionally, cell membrane receptor of natural killer/NK cells that is activated by binding of extracellular ligands including BAG6 and NCR3LG1. Stimulates NK cells cytotoxicity toward neighboring cells producing these ligands. It controls, for instance, NK cells cytotoxicity against tumor cells. Engagement of NCR3 by BAG6 also promotes myeloid dendritic cells (DC) maturation, both through killing DCs that did not acquire a mature phenotype, and inducing the release by NK cells of TNFA and IFNG that promote DC maturation. The chain is Natural cytotoxicity triggering receptor 3 (Ncr3) from Rattus norvegicus (Rat).